Consider the following 397-residue polypeptide: Tryptophan synthase beta chain (397 aa).

Lysine 88 is subject to N6-(pyridoxal phosphate)lysine.

It belongs to the TrpB family. In terms of assembly, tetramer of two alpha and two beta chains. Pyridoxal 5'-phosphate is required as a cofactor.

The enzyme catalyses (1S,2R)-1-C-(indol-3-yl)glycerol 3-phosphate + L-serine = D-glyceraldehyde 3-phosphate + L-tryptophan + H2O. It participates in amino-acid biosynthesis; L-tryptophan biosynthesis; L-tryptophan from chorismate: step 5/5. In terms of biological role, the beta subunit is responsible for the synthesis of L-tryptophan from indole and L-serine. The polypeptide is Tryptophan synthase beta chain (trpB) (Haemophilus influenzae (strain ATCC 51907 / DSM 11121 / KW20 / Rd)).